Here is a 656-residue protein sequence, read N- to C-terminus: MAEIIGIDLGTTNSCVAVMEGGKVRVIENAEGSRTTPSIVAYTKDGEVLVGASAKRQAVTNADRTLYAIKRLIGRRFDDNVVQKDIKMVPYKIIKADNGDAWVEVKDKEGKSQKLAPPQISAQVLIKMKKTAEDYLGHEVKDAVITVPAYFNDSQRQATKDAGKIAGLNVKRIINEPTAAALAYGMDKKKGDRKIAVYDLGGGTFDISIIEIAEVDGEHQFEVLATNGDTFLGGEDFDLRLIDYLAGEFKKDEGVDLHNDPLALQRLKEAAEKAKIELSSSQQTDVNLPYITADASGPKHLNIRLTRAKLESLVEDLVERTIEPCKVAIKDAGLKVSEIDDVILVGGQTRMPKVQEAVKNFFGKEARKDVNPDEAVAIGAAIQGAVLSGEVKDVLLLDVTPLSLGIETLGGVMTKLIEKNTTIPTKANQVFSTADDNQTAVTVHVLQGEREMASANKSLGRFDLSDIPPAPRGVPQIEVTFDIDANGILHVSAKDKATGKEQSIVIKASSGLSDEEVEKMVKDAEAHRDSDRKFHELVDARNQADAMIHAAEKSVKDLGSEVSADEKSAIEKVVNELKEAMKGNDKDAIEAKRKALTEHSSKLAERVYAKKGGAAGAPPGGEAEGEPQAQAGGKKEDVVDAEFEEVKDEKKKDEDK.

Threonine 204 carries the phosphothreonine; by autocatalysis modification. A disordered region spans residues 602–656; the sequence is KLAERVYAKKGGAAGAPPGGEAEGEPQAQAGGKKEDVVDAEFEEVKDEKKKDEDK. Low complexity predominate over residues 620–632; it reads GGEAEGEPQAQAG. The segment covering 647–656 has biased composition (basic and acidic residues); it reads KDEKKKDEDK.

The protein belongs to the heat shock protein 70 family.

In terms of biological role, acts as a chaperone. The polypeptide is Chaperone protein DnaK (Coxiella burnetii (strain CbuG_Q212) (Coxiella burnetii (strain Q212))).